The following is a 258-amino-acid chain: Thiazole synthase (258 aa).

The Schiff-base intermediate with DXP role is filled by Lys100. 1-deoxy-D-xylulose 5-phosphate-binding positions include Gly161, 187–188 (AG), and 209–210 (NT).

It belongs to the ThiG family. In terms of assembly, homotetramer. Forms heterodimers with either ThiH or ThiS.

It localises to the cytoplasm. It catalyses the reaction [ThiS sulfur-carrier protein]-C-terminal-Gly-aminoethanethioate + 2-iminoacetate + 1-deoxy-D-xylulose 5-phosphate = [ThiS sulfur-carrier protein]-C-terminal Gly-Gly + 2-[(2R,5Z)-2-carboxy-4-methylthiazol-5(2H)-ylidene]ethyl phosphate + 2 H2O + H(+). It functions in the pathway cofactor biosynthesis; thiamine diphosphate biosynthesis. Functionally, catalyzes the rearrangement of 1-deoxy-D-xylulose 5-phosphate (DXP) to produce the thiazole phosphate moiety of thiamine. Sulfur is provided by the thiocarboxylate moiety of the carrier protein ThiS. In vitro, sulfur can be provided by H(2)S. The protein is Thiazole synthase of Campylobacter jejuni (strain RM1221).